The following is a 156-amino-acid chain: Ribosomal RNA large subunit methyltransferase H (156 aa).

Residues Leu-73, Gly-104, and 123 to 128 (LSALTL) contribute to the S-adenosyl-L-methionine site.

It belongs to the RNA methyltransferase RlmH family. In terms of assembly, homodimer.

It is found in the cytoplasm. The enzyme catalyses pseudouridine(1915) in 23S rRNA + S-adenosyl-L-methionine = N(3)-methylpseudouridine(1915) in 23S rRNA + S-adenosyl-L-homocysteine + H(+). Its function is as follows. Specifically methylates the pseudouridine at position 1915 (m3Psi1915) in 23S rRNA. The sequence is that of Ribosomal RNA large subunit methyltransferase H from Psychromonas ingrahamii (strain DSM 17664 / CCUG 51855 / 37).